Here is a 120-residue protein sequence, read N- to C-terminus: FK506-binding protein 1A (120 aa).

The 89-residue stretch at 26-114 (GDNVDVHYKG…IFETELVGIK (89 aa)) folds into the PPIase FKBP-type domain.

The protein belongs to the FKBP-type PPIase family. FKBP1 subfamily.

The protein resides in the cytoplasm. It catalyses the reaction [protein]-peptidylproline (omega=180) = [protein]-peptidylproline (omega=0). Functionally, PPIases accelerate the folding of proteins. It catalyzes the cis-trans isomerization of proline imidic peptide bonds in oligopeptides. In Neurospora crassa (strain ATCC 24698 / 74-OR23-1A / CBS 708.71 / DSM 1257 / FGSC 987), this protein is FK506-binding protein 1A (fkr-2).